The primary structure comprises 356 residues: Thiamine thiazole synthase, chloroplastic (356 aa).

The N-terminal 51 residues, 1 to 51 (MAAMASTAFAPSVSSTTNKLFDSSFHGAPMSPSLLRLQPIKSSRPNNLSIS), are a transit peptide targeting the chloroplast. Substrate contacts are provided by residues A101, 121-122 (EQ), G129, and A194. 2,3-didehydroalanine (Cys) is present on C223. Substrate contacts are provided by residues D225, H240, M292, and 302–304 (RMG).

Belongs to the THI4 family. In terms of assembly, homooctamer. Fe cation serves as cofactor. During the catalytic reaction, a sulfide is transferred from Cys-223 to a reaction intermediate, generating a dehydroalanine residue.

The protein resides in the plastid. The protein localises to the chloroplast. The catalysed reaction is [ADP-thiazole synthase]-L-cysteine + glycine + NAD(+) = [ADP-thiazole synthase]-dehydroalanine + ADP-5-ethyl-4-methylthiazole-2-carboxylate + nicotinamide + 3 H2O + 2 H(+). In terms of biological role, involved in biosynthesis of the thiamine precursor thiazole. Catalyzes the conversion of NAD and glycine to adenosine diphosphate 5-(2-hydroxyethyl)-4-methylthiazole-2-carboxylic acid (ADT), an adenylated thiazole intermediate. The reaction includes an iron-dependent sulfide transfer from a conserved cysteine residue of the protein to a thiazole intermediate. The enzyme can only undergo a single turnover, which suggests it is a suicide enzyme. May have additional roles in adaptation to various stress conditions and in DNA damage tolerance. This Citrus sinensis (Sweet orange) protein is Thiamine thiazole synthase, chloroplastic.